The chain runs to 89 residues: Myrmicitoxin(1)-Pm2a (89 aa).

An N-terminal signal peptide occupies residues 1–22 (MEIPKLLYIAVIAIGLSGSLTC). The propeptide occupies 23–61 (ATPLANPWGDPEAEANPEAKATAEATAEAIAEALAEPEP). Position 88 is an asparagine amide (Asn-88).

It belongs to the formicidae venom clade 1 family. As to expression, expressed by the venom gland.

The protein resides in the secreted. In terms of biological role, toxin that potently modulates mammalian voltage-gated sodium (Nav) channels, reducing the voltage threshold for activation and inhibiting channel inactivation. Shows activity on hNav1.6/SCN8A (EC(50)=176 nM), mNav1.7/SCN9A (EC(50)=102 nM) and hNav1.7 (EC(50)=154 nM). In vivo, causes spontaneous, gradual and long-lasting nocifensive behaviors by intraplantar injection in mice, as well as pronounced swelling of the injected paw. Does not have effect on insects (blowflies). The polypeptide is Myrmicitoxin(1)-Pm2a (Pogonomyrmex maricopa (Maricopa harvester ant)).